Reading from the N-terminus, the 45-residue chain is Large ribosomal subunit protein bL34 (45 aa).

It belongs to the bacterial ribosomal protein bL34 family.

The chain is Large ribosomal subunit protein bL34 (rpmH) from Streptomyces coelicolor (strain ATCC BAA-471 / A3(2) / M145).